The primary structure comprises 350 residues: Neuronal-specific septin-3 (350 aa).

Basic and acidic residues predominate over residues 1–10 (MSKGLPEART). A disordered region spans residues 1 to 29 (MSKGLPEARTDAAMSELVPEPRPKPAVPM). The 274-residue stretch at 58–331 (TGFDFNIMVV…ETYRAKRLND (274 aa)) folds into the Septin-type G domain. A G1 motif region spans residues 68–75 (GQSGLGKS). 68–75 (GQSGLGKS) lines the GTP pocket. At serine 91 the chain carries Phosphoserine. Residue threonine 102 coordinates GTP. The G3 motif stretch occupies residues 125–128 (DTPG). The tract at residues 207-210 (AKAD) is G4 motif. GTP is bound by residues 208 to 216 (KADTMTLEE), glycine 265, and arginine 280. Residues 328–350 (RLNDNGGLPPVSVDTEESHDSNP) form a disordered region.

Belongs to the TRAFAC class TrmE-Era-EngA-EngB-Septin-like GTPase superfamily. Septin GTPase family. In terms of assembly, septins polymerize into heterooligomeric protein complexes that form filaments, and can associate with cellular membranes, actin filaments and microtubules. GTPase activity is required for filament formation. Phosphorylated by PKG on serine residues. Phosphorylated by PKG on Ser-91. As to expression, expressed in the brain including the cerebrum, hippocampus and cerebellum (at protein level).

The protein localises to the cytoplasm. Its subcellular location is the cytoskeleton. It localises to the synapse. Its function is as follows. Filament-forming cytoskeletal GTPase. May play a role in cytokinesis (Potential). The chain is Neuronal-specific septin-3 from Mus musculus (Mouse).